The following is a 195-amino-acid chain: C2 domain-containing protein DDB_G0290753 (195 aa).

Residues 38 to 161 (KKLTKETKFE…NIKKYSYTFK (124 aa)) enclose the C2 domain. Ca(2+)-binding residues include Asp72, Asp78, Asp131, Asp133, and Asp139.

It depends on Ca(2+) as a cofactor.

This Dictyostelium discoideum (Social amoeba) protein is C2 domain-containing protein DDB_G0290753.